The following is a 128-amino-acid chain: Aspartate 1-decarboxylase (128 aa).

The active-site Schiff-base intermediate with substrate; via pyruvic acid is the Ser25. A Pyruvic acid (Ser) modification is found at Ser25. Residue Thr57 coordinates substrate. The Proton donor role is filled by Tyr58. 73–75 (GAA) is a substrate binding site.

This sequence belongs to the PanD family. Heterooctamer of four alpha and four beta subunits. It depends on pyruvate as a cofactor. In terms of processing, is synthesized initially as an inactive proenzyme, which is activated by self-cleavage at a specific serine bond to produce a beta-subunit with a hydroxyl group at its C-terminus and an alpha-subunit with a pyruvoyl group at its N-terminus.

The protein localises to the cytoplasm. The enzyme catalyses L-aspartate + H(+) = beta-alanine + CO2. It functions in the pathway cofactor biosynthesis; (R)-pantothenate biosynthesis; beta-alanine from L-aspartate: step 1/1. Catalyzes the pyruvoyl-dependent decarboxylation of aspartate to produce beta-alanine. In Chlorobium luteolum (strain DSM 273 / BCRC 81028 / 2530) (Pelodictyon luteolum), this protein is Aspartate 1-decarboxylase.